A 301-amino-acid polypeptide reads, in one-letter code: Protein phosphatase 1 regulatory subunit 3B (301 aa).

The PP1-binding motif motif lies at 79–82 (RVSF). Residues 142 to 250 (RNRLQAESVC…SNKGLNYRIV (109 aa)) enclose the CBM21 domain.

As to quaternary structure, interacts with glycogen, PPP1CC catalytic subunit of PP1 and PYGL. Associates with glycogen particles. Forms complexes with debranching enzyme, glycogen phosphorylase, glycogen synthase and phosphorylase kinase which is necessary for its regulation of PP1 activity.

Functionally, acts as a glycogen-targeting subunit for phosphatase PP1. Facilitates interaction of the PP1 with enzymes of the glycogen metabolism and regulates its activity. Suppresses the rate at which PP1 dephosphorylates (inactivates) glycogen phosphorylase and enhances the rate at which it activates glycogen synthase and therefore limits glycogen breakdown. This chain is Protein phosphatase 1 regulatory subunit 3B (ppp1r3b), found in Xenopus tropicalis (Western clawed frog).